Consider the following 132-residue polypeptide: Small ribosomal subunit protein eS12 (132 aa).

An N-acetylalanine modification is found at Ala-2. An N6-succinyllysine modification is found at Lys-129.

Belongs to the eukaryotic ribosomal protein eS12 family. In terms of assembly, part of the small subunit (SSU) processome, composed of more than 70 proteins and the RNA chaperone small nucleolar RNA (snoRNA) U3. Subunit of the 40S ribosomal complex.

It localises to the nucleus. The protein resides in the nucleolus. Its function is as follows. Part of the small subunit (SSU) processome, first precursor of the small eukaryotic ribosomal subunit. During the assembly of the SSU processome in the nucleolus, many ribosome biogenesis factors, an RNA chaperone and ribosomal proteins associate with the nascent pre-rRNA and work in concert to generate RNA folding, modifications, rearrangements and cleavage as well as targeted degradation of pre-ribosomal RNA by the RNA exosome. Subunit of the 40S ribosomal complex. The chain is Small ribosomal subunit protein eS12 (Rps12) from Rattus norvegicus (Rat).